Here is a 151-residue protein sequence, read N- to C-terminus: ATP synthase subunit b' (151 aa).

A helical membrane pass occupies residues 18–38 (TLPLMALQVVLLTFILNALFF).

It belongs to the ATPase B chain family. As to quaternary structure, F-type ATPases have 2 components, F(1) - the catalytic core - and F(0) - the membrane proton channel. F(1) has five subunits: alpha(3), beta(3), gamma(1), delta(1), epsilon(1). F(0) has four main subunits: a(1), b(1), b'(1) and c(10-14). The alpha and beta chains form an alternating ring which encloses part of the gamma chain. F(1) is attached to F(0) by a central stalk formed by the gamma and epsilon chains, while a peripheral stalk is formed by the delta, b and b' chains.

The protein resides in the cellular thylakoid membrane. F(1)F(0) ATP synthase produces ATP from ADP in the presence of a proton or sodium gradient. F-type ATPases consist of two structural domains, F(1) containing the extramembraneous catalytic core and F(0) containing the membrane proton channel, linked together by a central stalk and a peripheral stalk. During catalysis, ATP synthesis in the catalytic domain of F(1) is coupled via a rotary mechanism of the central stalk subunits to proton translocation. Its function is as follows. Component of the F(0) channel, it forms part of the peripheral stalk, linking F(1) to F(0). The b'-subunit is a diverged and duplicated form of b found in plants and photosynthetic bacteria. The polypeptide is ATP synthase subunit b' (Prochlorococcus marinus (strain MIT 9303)).